We begin with the raw amino-acid sequence, 273 residues long: MGQKVTGGIKTVDMRDPTYRPLKQELQGLDYCKPTRLDLLLDMPPVSYDVQLLHSWNNNDRSLNVFVKEDDKLIFHRHPVAQSTDAIRGKVGYTRGLHVWQITWAMRQRGTHAVVGVATADAPLHSVGYTTLVGNNHESWGWDLGRNRLYHDGKNQPSKTYPAFLEPDETFIVPDSFLVALDMDDGTLSFIVDGQYMGVAFRGLKGKKLYPVVSAVWGHCEIRMRYLNGLDPEPLPLMDLCRRSVRLALGKERLGAIPALPLPASLKAYLLYQ.

Tyr-31 bears the Phosphotyrosine mark. Residues 33 to 231 enclose the B30.2/SPRY domain; the sequence is KPTRLDLLLD…IRMRYLNGLD (199 aa). One can recognise an SOCS box domain in the interval 232 to 273; the sequence is PEPLPLMDLCRRSVRLALGKERLGAIPALPLPASLKAYLLYQ.

Belongs to the SPSB family. In terms of assembly, component of the probable ECS(SPSB1) E3 ubiquitin-protein ligase complex which contains CUL5, RNF7/RBX2, Elongin BC complex and SPSB1. Interacts with CUL5, RNF7, ELOB and ELOC. Directly interacts with MET tyrosine kinase domain in the presence and in the absence of HGF, however HGF treatment has a positive effect on this interaction. When phosphorylated, interacts with RASA1 without affecting its stability. Interacts (via B30.2/SPRY domain) with PAWR; this interaction is direct and occurs in association with the Elongin BC complex. Interacts with EPHB2. Interacts with NOS2.

It localises to the cytoplasm. The protein localises to the cytosol. It participates in protein modification; protein ubiquitination. Substrate recognition component of a SCF-like ECS (Elongin BC-CUL2/5-SOCS-box protein) E3 ubiquitin-protein ligase complex which mediates the ubiquitination and subsequent proteasomal degradation of target proteins. Negatively regulates nitric oxide (NO) production and limits cellular toxicity in activated macrophages by mediating the ubiquitination and proteasomal degradation of NOS2. Acts as a bridge which links the NOS2 with the ECS E3 ubiquitin ligase complex components ELOC and CUL5. The polypeptide is SPRY domain-containing SOCS box protein 1 (Spsb1) (Mus musculus (Mouse)).